Reading from the N-terminus, the 171-residue chain is S-ribosylhomocysteine lyase (171 aa).

Fe cation is bound by residues H54, H58, and C128.

Belongs to the LuxS family. Homodimer. The cofactor is Fe cation.

The catalysed reaction is S-(5-deoxy-D-ribos-5-yl)-L-homocysteine = (S)-4,5-dihydroxypentane-2,3-dione + L-homocysteine. Its function is as follows. Involved in the synthesis of autoinducer 2 (AI-2) which is secreted by bacteria and is used to communicate both the cell density and the metabolic potential of the environment. The regulation of gene expression in response to changes in cell density is called quorum sensing. Catalyzes the transformation of S-ribosylhomocysteine (RHC) to homocysteine (HC) and 4,5-dihydroxy-2,3-pentadione (DPD). The protein is S-ribosylhomocysteine lyase of Pectobacterium atrosepticum (strain SCRI 1043 / ATCC BAA-672) (Erwinia carotovora subsp. atroseptica).